Reading from the N-terminus, the 111-residue chain is Guanylate cyclase activator 2B (111 aa).

Residues 1–26 (MGSRTLLGHLSVLAVVLLLLLQGTQS) form the signal peptide. Positions 27-96 (VDIKYQGYQV…SILQALRTMD (70 aa)) are excised as a propeptide. Intrachain disulfides connect Cys-67–Cys-80, Cys-100–Cys-108, and Cys-103–Cys-111.

It belongs to the guanylin family.

The protein resides in the secreted. Endogenous activator of intestinal guanylate cyclase. It stimulates this enzyme through the same receptor binding region as the heat-stable enterotoxins. May be a potent physiological regulator of intestinal fluid and electrolyte transport. May be an autocrine/paracrine regulator of intestinal salt and water transport. The sequence is that of Guanylate cyclase activator 2B (GUCA2B) from Cavia porcellus (Guinea pig).